The following is a 227-amino-acid chain: Enolase-phosphatase E1 (227 aa).

Asp-11 and Glu-13 together coordinate Mg(2+). Substrate is bound by residues 118-119 (SS) and Lys-161. Asp-186 is a binding site for Mg(2+).

This sequence belongs to the HAD-like hydrolase superfamily. MasA/MtnC family. As to quaternary structure, monomer. The cofactor is Mg(2+).

The protein resides in the cytoplasm. It localises to the nucleus. The catalysed reaction is 5-methylsulfanyl-2,3-dioxopentyl phosphate + H2O = 1,2-dihydroxy-5-(methylsulfanyl)pent-1-en-3-one + phosphate. It functions in the pathway amino-acid biosynthesis; L-methionine biosynthesis via salvage pathway; L-methionine from S-methyl-5-thio-alpha-D-ribose 1-phosphate: step 3/6. The protein operates within amino-acid biosynthesis; L-methionine biosynthesis via salvage pathway; L-methionine from S-methyl-5-thio-alpha-D-ribose 1-phosphate: step 4/6. Bifunctional enzyme that catalyzes the enolization of 2,3-diketo-5-methylthiopentyl-1-phosphate (DK-MTP-1-P) into the intermediate 2-hydroxy-3-keto-5-methylthiopentenyl-1-phosphate (HK-MTPenyl-1-P), which is then dephosphorylated to form the acireductone 1,2-dihydroxy-3-keto-5-methylthiopentene (DHK-MTPene). The chain is Enolase-phosphatase E1 from Saccharomyces cerevisiae (strain RM11-1a) (Baker's yeast).